A 477-amino-acid polypeptide reads, in one-letter code: Ribulose bisphosphate carboxylase large chain (477 aa).

Residues 1-2 constitute a propeptide that is removed on maturation; the sequence is MS. N-acetylproline is present on proline 3. Substrate contacts are provided by asparagine 123 and threonine 173. The Proton acceptor role is filled by lysine 175. Lysine 177 lines the substrate pocket. Lysine 201, aspartate 203, and glutamate 204 together coordinate Mg(2+). At lysine 201 the chain carries N6-carboxylysine. The Proton acceptor role is filled by histidine 294. The substrate site is built by arginine 295, histidine 327, and serine 379.

Belongs to the RuBisCO large chain family. Type I subfamily. In terms of assembly, heterohexadecamer of 8 large chains and 8 small chains; disulfide-linked. The disulfide link is formed within the large subunit homodimers. The cofactor is Mg(2+). In terms of processing, the disulfide bond which can form in the large chain dimeric partners within the hexadecamer appears to be associated with oxidative stress and protein turnover.

The protein resides in the plastid. The protein localises to the chloroplast. The enzyme catalyses 2 (2R)-3-phosphoglycerate + 2 H(+) = D-ribulose 1,5-bisphosphate + CO2 + H2O. It catalyses the reaction D-ribulose 1,5-bisphosphate + O2 = 2-phosphoglycolate + (2R)-3-phosphoglycerate + 2 H(+). Functionally, ruBisCO catalyzes two reactions: the carboxylation of D-ribulose 1,5-bisphosphate, the primary event in carbon dioxide fixation, as well as the oxidative fragmentation of the pentose substrate in the photorespiration process. Both reactions occur simultaneously and in competition at the same active site. This Avena sativa (Oat) protein is Ribulose bisphosphate carboxylase large chain.